A 290-amino-acid chain; its full sequence is Membrane protein insertase YidC 2 (290 aa).

Positions 1 to 19 (MKKKALLPLFLGIMIFLAG) are cleaved as a signal peptide. Cys-20 is lipidated: N-palmitoyl cysteine. A lipid anchor (S-diacylglycerol cysteine) is attached at Cys-20. 5 helical membrane passes run 56–76 (FGLA…PFML), 134–154 (MLGC…YFVL), 176–196 (PDIW…VVSS), 211–231 (MVIS…ALGL), and 232–252 (YWSV…IYYS). The disordered stretch occupies residues 266–290 (YEREHNPSSKKKGKNTQVVSKKNKK). The segment covering 280–290 (NTQVVSKKNKK) has biased composition (polar residues).

This sequence belongs to the OXA1/ALB3/YidC family. Type 2 subfamily.

Its subcellular location is the cell membrane. Required for the insertion and/or proper folding and/or complex formation of integral membrane proteins into the membrane. Involved in integration of membrane proteins that insert both dependently and independently of the Sec translocase complex, as well as at least some lipoproteins. This is Membrane protein insertase YidC 2 from Staphylococcus epidermidis (strain ATCC 35984 / DSM 28319 / BCRC 17069 / CCUG 31568 / BM 3577 / RP62A).